The following is a 150-amino-acid chain: Probable histone H2A.5 (150 aa).

Residues 1 to 12 show a composition bias toward low complexity; the sequence is MESSQATTKPTR. 2 disordered regions span residues 1-28 and 130-150; these read MESSQATTKPTRGAGGRKGGDRKKSVSK and KSTASSSQAEKASATKSPKKA. The span at 131-150 shows a compositional bias: polar residues; sequence STASSSQAEKASATKSPKKA. Serine 146 bears the Phosphoserine mark. The short motif at 146–149 is the SPKK motif element; it reads SPKK.

It belongs to the histone H2A family. In terms of assembly, the nucleosome is a histone octamer containing two molecules each of H2A, H2B, H3 and H4 assembled in one H3-H4 heterotetramer and two H2A-H2B heterodimers. The octamer wraps approximately 147 bp of DNA. In terms of processing, not ubiquitinated.

It is found in the nucleus. The protein localises to the chromosome. Core component of nucleosome. Nucleosomes wrap and compact DNA into chromatin, limiting DNA accessibility to the cellular machineries which require DNA as a template. Histones thereby play a central role in transcription regulation, DNA repair, DNA replication and chromosomal stability. DNA accessibility is regulated via a complex set of post-translational modifications of histones, also called histone code, and nucleosome remodeling. This is Probable histone H2A.5 from Arabidopsis thaliana (Mouse-ear cress).